Here is a 385-residue protein sequence, read N- to C-terminus: uncharacterized protein (385 aa).

This is an uncharacterized protein from Caenorhabditis elegans.